Here is a 406-residue protein sequence, read N- to C-terminus: Plasma serine protease inhibitor (406 aa).

Residues 1–19 (MQLFLLLCLVLLSPQGASL) form the signal peptide. Positions 20–25 (HRHHPR) are cleaved as a propeptide — removed in mature form. The O-linked (GalNAc...) threonine glycan is linked to T39. 3 N-linked (GlcNAc...) asparagine glycosylation sites follow: N249, N262, and N338.

Belongs to the serpin family. In terms of assembly, forms protease inhibiting heterodimers in extracellular body fluids with serine proteases such as activated protein C/coagulation factor V/F5, acrosin/ACR, chymotrypsinogen B/CTRB1, prothrombin/F2, factor Xa/F10, factor XI/F11, kallikrein/KLKB1, tissue kallikrein, trypsin/PRSS1, prostate specific antigen/KLK3, tissue plasminogen activator/PLAT and urinary plasminogen activator/PLAU. Forms membrane-anchored serine proteases inhibiting heterodimers with TMPRSS7 and TMPRSS11E. Interacts with SEMG2. N- and O-glycosylated. N-glycosylation consists of a mixture of sialylated bi- (including sialyl-Lewis X epitopes), tri- and tetra-antennary complex-type chains; affects the maximal heparin- and thrombomodulin-enhanced rates of thrombin inhibition. O-glycosylated with core 1 or possibly core 8 glycans. Further modified with 2 sialic acid residues. Post-translationally, proteolytically cleaved. Inhibition of proteases is accompanied by formation of a stable enzyme-inhibitor complex and by degradation of the serpin to lower molecular weight derivatives. Proteolytically cleaved at the N-terminus; inhibits slightly the heparin- and thrombomodulin-enhanced rates of thrombin inhibition. Predominantly expressed in the epithelium of seminal vesicles. Expressed in the proximal tubular epithelium of the kidney. Expressed in the superficial and more differentiated epidermal keratinocytes of the skin. Expressed in megakaryocytes and platelets. Expressed poorly in kidney tumor cells compared to non tumor kidney tissues. Expressed in spermatozoa. Present in very high concentration in seminal plasma. Present in high concentration in plasma, synovial and Graaf follicle fluids. Present in low concentration in breast milk and in amniotic fluids. Present in very low concentration in urine, cerebrospinal fluids, saliva and tears (at protein level). Strongly expressed in liver. Expressed in kidney, spleen, pancreas, skeletal muscle, heart, testes, ovary, interstitial Leydig cells, epididymal glands, seminal vesicles and prostate.

Its subcellular location is the secreted. The protein resides in the extracellular space. Its inhibitory activity is greatly enhanced in the presence of glycosaminoglycans, heparin, thrombomodulin and phospholipids vesicles. In terms of biological role, heparin-dependent serine protease inhibitor acting in body fluids and secretions. Inactivates serine proteases by binding irreversibly to their serine activation site. Involved in the regulation of intravascular and extravascular proteolytic activities. Plays hemostatic roles in the blood plasma. Acts as a procoagulant and pro-inflammatory factor by inhibiting the anticoagulant activated protein C factor as well as the generation of activated protein C factor by the thrombin/thrombomodulin complex. Acts as an anticoagulant factor by inhibiting blood coagulation factors like prothrombin, factor XI, factor Xa, plasma kallikrein and fibrinolytic enzymes such as tissue- and urinary-type plasminogen activators. In seminal plasma, inactivates several serine proteases implicated in the reproductive system. Inhibits the serpin acrosin; indirectly protects component of the male genital tract from being degraded by excessive released acrosin. Inhibits tissue- and urinary-type plasminogen activator, prostate-specific antigen and kallikrein activities; has a control on the sperm motility and fertilization. Inhibits the activated protein C-catalyzed degradation of SEMG1 and SEMG2; regulates the degradation of semenogelin during the process of transfer of spermatozoa from the male reproductive tract into the female tract. In urine, inhibits urinary-type plasminogen activator and kallikrein activities. Inactivates membrane-anchored serine proteases activities such as MPRSS7 and TMPRSS11E. Inhibits urinary-type plasminogen activator-dependent tumor cell invasion and metastasis. May also play a non-inhibitory role in seminal plasma and urine as a hydrophobic hormone carrier by its binding to retinoic acid. The protein is Plasma serine protease inhibitor (SERPINA5) of Homo sapiens (Human).